Here is a 100-residue protein sequence, read N- to C-terminus: Small ribosomal subunit protein uS14c (100 aa).

Belongs to the universal ribosomal protein uS14 family. Part of the 30S ribosomal subunit.

It is found in the plastid. Its subcellular location is the chloroplast. In terms of biological role, binds 16S rRNA, required for the assembly of 30S particles. This chain is Small ribosomal subunit protein uS14c, found in Nymphaea alba (White water-lily).